The primary structure comprises 445 residues: Chromosome partition protein MukF (445 aa).

The leucine-zipper stretch occupies residues 213–241 (LSETSATLRELQDTLQAAGDELQTQILDI).

It belongs to the MukF family. Interacts, and probably forms a ternary complex, with MukE and MukB via its C-terminal region. The complex formation is stimulated by calcium or magnesium. It is required for an interaction between MukE and MukB.

Its subcellular location is the cytoplasm. It localises to the nucleoid. Functionally, involved in chromosome condensation, segregation and cell cycle progression. May participate in facilitating chromosome segregation by condensation DNA from both sides of a centrally located replisome during cell division. Not required for mini-F plasmid partitioning. Probably acts via its interaction with MukB and MukE. Overexpression results in anucleate cells. It has a calcium binding activity. This Vibrio cholerae serotype O1 (strain ATCC 39315 / El Tor Inaba N16961) protein is Chromosome partition protein MukF.